Consider the following 217-residue polypeptide: Ribosomal RNA small subunit methyltransferase G (217 aa).

S-adenosyl-L-methionine contacts are provided by residues G78, F83, 129–130, and R146; that span reads GE.

This sequence belongs to the methyltransferase superfamily. RNA methyltransferase RsmG family.

It is found in the cytoplasm. The enzyme catalyses guanosine(527) in 16S rRNA + S-adenosyl-L-methionine = N(7)-methylguanosine(527) in 16S rRNA + S-adenosyl-L-homocysteine. Specifically methylates the N7 position of guanine in position 527 of 16S rRNA. The chain is Ribosomal RNA small subunit methyltransferase G from Geobacter sulfurreducens (strain ATCC 51573 / DSM 12127 / PCA).